A 109-amino-acid polypeptide reads, in one-letter code: Nucleoid-associated protein VV1_2004 (109 aa).

The protein belongs to the YbaB/EbfC family. Homodimer.

It localises to the cytoplasm. It is found in the nucleoid. Binds to DNA and alters its conformation. May be involved in regulation of gene expression, nucleoid organization and DNA protection. The sequence is that of Nucleoid-associated protein VV1_2004 from Vibrio vulnificus (strain CMCP6).